Reading from the N-terminus, the 267-residue chain is MEAFPWAPRSPRRARAPAPMALVPSARYVSASGPVHPQPFSSWNDYLGLATLITRASDRGSPHEGPGPTAAGPTMGPPEDDEDDDGEEPEAGGRYLGGALELRALELCAGPAEPGLLEERFAELNPFAGRAAAVLLGCAPTASTTAAAASTAEVTPREEPSPAWAAEPRLHAASGATAARLLKPELQVCVFCRNNKEAVALYTTHILKGPDGRVLCPVLRRYTCPLCGASGDNAHTIKYCPLSKVPPPTVRPPPRSNRDSLPSKKLR.

Residues 40 to 56 (FSSWNDYLGLATLITRA) form an essential for its translational repressor activity region. The interval 57–94 (SDRGSPHEGPGPTAAGPTMGPPEDDEDDDGEEPEAGGR) is disordered. Residues 78 to 90 (PEDDEDDDGEEPE) are compositionally biased toward acidic residues. A Nanos-type zinc finger spans residues 188–242 (VCVFCRNNKEAVALYTTHILKGPDGRVLCPVLRRYTCPLCGASGDNAHTIKYCPL). Zn(2+) is bound by residues Cys-189, Cys-192, His-205, Cys-216, Cys-224, Cys-227, His-235, and Cys-240. 2 short sequence motifs (C2HC) span residues 189 to 216 (CVFCRNNKEAVALYTTHILKGPDGRVLC) and 224 to 240 (CPLCGASGDNAHTIKYC). The disordered stretch occupies residues 243-267 (SKVPPPTVRPPPRSNRDSLPSKKLR). Residues 244–255 (KVPPPTVRPPPR) show a composition bias toward pro residues. Basic and acidic residues predominate over residues 256–267 (SNRDSLPSKKLR).

This sequence belongs to the nanos family. In terms of assembly, interacts with PUM2, SNAPIN and CTNNB1. Interacts (via N-terminal region) with CTNND1. Interacts with DDX20 (via N-terminal region). In terms of tissue distribution, expressed in the oocyte. Transiently expressed in eight-cell embryos. At 12.5 dpc, it is re-expressed in the central nervous system and the expression continues in the adult brain, in which the hippocampal formation is the predominant region. Expressed in the seminiferous tubules of mature testis, but not in the primordial germ cells.

The protein localises to the cytoplasm. It is found in the perinuclear region. In terms of biological role, may act as a translational repressor which regulates translation of specific mRNAs by forming a complex with PUM2 that associates with the 3'-UTR of mRNA targets. Capable of interfering with the proadhesive and anti-invasive functions of E-cadherin. Up-regulates the production of MMP14 to promote tumor cell invasion. Not essential for normal development. This is Nanos homolog 1 (Nanos1) from Mus musculus (Mouse).